The primary structure comprises 374 residues: Pectate lyase 2 (374 aa).

The first 22 residues, 1–22 (MKYLLPTAATGLLLLAAQPAVA), serve as a signal peptide directing secretion. A disulfide bridge connects residues Cys93 and Cys176. Positions 150, 152, 187, and 191 each coordinate Ca(2+). Residue Arg239 is part of the active site. A disulfide bond links Cys350 and Cys373.

It belongs to the polysaccharide lyase 1 family. PLADES subfamily. The cofactor is Ca(2+).

It localises to the secreted. The enzyme catalyses Eliminative cleavage of (1-&gt;4)-alpha-D-galacturonan to give oligosaccharides with 4-deoxy-alpha-D-galact-4-enuronosyl groups at their non-reducing ends.. Its pathway is glycan metabolism; pectin degradation; 2-dehydro-3-deoxy-D-gluconate from pectin: step 2/5. In terms of biological role, involved in maceration and soft-rotting of plant tissue. The sequence is that of Pectate lyase 2 (pel2) from Pectobacterium atrosepticum (strain SCRI 1043 / ATCC BAA-672) (Erwinia carotovora subsp. atroseptica).